Reading from the N-terminus, the 1043-residue chain is Unconventional myosin-Ia (1043 aa).

A Myosin motor domain is found at 8-694 (VGVEDLILLE…TLFYLEEQRR (687 aa)). 101–108 (GESGAGKT) serves as a coordination point for ATP. Positions 571–593 (VAVLMKNLYSKNPNYIRCIKPND) are actin-binding. 3 IQ domains span residues 697 to 719 (LQQL…HYQQ), 720 to 742 (MRKS…HYGK), and 743 to 772 (IRSS…SGAA). Residues 858–1042 (KASYPQSVPI…KGSNAMEVTV (185 aa)) form the TH1 domain.

Belongs to the TRAFAC class myosin-kinesin ATPase superfamily. Myosin family. Phosphorylated by ALPK1.

Its function is as follows. Involved in directing the movement of organelles along actin filaments. The protein is Unconventional myosin-Ia (Myo1a) of Mus musculus (Mouse).